The following is a 125-amino-acid chain: MIIGVGIDIVEIERFVSWTHNVRLLRRFFHQEEIVDFFKNHMRAQFLATRFAAKEAFGKALGTGLRNMELRNIRVCQNGWGKPRLEVYGAAQAMLAATGGTHIQVSLTHEREVASAIVIIEGEPL.

Residues Asp-8 and Glu-55 each coordinate Mg(2+).

This sequence belongs to the P-Pant transferase superfamily. AcpS family. It depends on Mg(2+) as a cofactor.

Its subcellular location is the cytoplasm. The enzyme catalyses apo-[ACP] + CoA = holo-[ACP] + adenosine 3',5'-bisphosphate + H(+). Its function is as follows. Transfers the 4'-phosphopantetheine moiety from coenzyme A to a Ser of acyl-carrier-protein. This is Holo-[acyl-carrier-protein] synthase from Treponema pallidum (strain Nichols).